Reading from the N-terminus, the 473-residue chain is MRLVVVGLWCLILGLILNPTKFCDAGVTSSYVRKSLSALPNAEDVDMPWDSDVFAVPSGYNAPQQVHITQGDYEGRGVIISWTTPYDKAGANKVVYWSENSKSQKRAMGTVVTYKYYNYTSAFIHHCTIKDLEYDTKYYYRLGFGDAKRQFWFVTPPKPGPDVPYVFGLIGDIGQTHDSNTTLTHYEQNSAKGQAVLFMGDLSYSNRWPNHDNNRWDTWGRFSERSVAYQPWIWTAGNHEIDYAPDIGEYQPFVPFTNRYPTPHEASGSGDPLWYAIKRASAHIIVLSSYSGFVKYSPQYKWFTSELEKVNRSETPWLIVLVHAPLYNSYEAHYMEGEAMRAIFEPYFVYYKVDIVFSGHVHSYERSERVSNVAYNIVNAKCTPVSDESAPVYITIGDGGNSEGLASEMTQPQPSYSAFREASFGHGIFDIKNRTHAHFSWHRNQDGASVEADSLWLLNRYWASEDASSMSAM.

A signal peptide spans Met1–Ala38. Asn118 carries N-linked (GlcNAc...) asparagine glycosylation. Asp172 is a Fe cation binding site. Residue Asn180 is glycosylated (N-linked (GlcNAc...) asparagine). Residues Asp201 and Tyr204 each coordinate Fe cation. A Mn(2+)-binding site is contributed by Asp201. Mn(2+) is bound at residue Asn238. Position 238 (Asn238) interacts with substrate. Asn311 carries an N-linked (GlcNAc...) asparagine glycan. His323 lines the Mn(2+) pocket. The Proton donor role is filled by His333. His360 is a binding site for Mn(2+). His360 to His362 contacts substrate. His362 serves as a coordination point for Fe cation. N-linked (GlcNAc...) asparagine glycosylation occurs at Asn433.

The protein belongs to the metallophosphoesterase superfamily. Purple acid phosphatase family. As to quaternary structure, homodimer; disulfide-linked. Fe cation is required as a cofactor. The cofactor is Mn(2+). It depends on Zn(2+) as a cofactor. Cu(2+) serves as cofactor. Requires Mg(2+) as cofactor.

The protein resides in the secreted. The enzyme catalyses a phosphate monoester + H2O = an alcohol + phosphate. This is Purple acid phosphatase 1 (PAP1) from Ipomoea batatas (Sweet potato).